Consider the following 122-residue polypeptide: uncharacterized protein (122 aa).

Over residues 1-15 (MAEPGGRGDYRKDGR) the composition is skewed to basic and acidic residues. A disordered region spans residues 1 to 49 (MAEPGGRGDYRKDGRLPSLSRSPLSTTLGTSPACGLEIPPTSGARPDGS). Low complexity predominate over residues 16-32 (LPSLSRSPLSTTLGTSP).

This is an uncharacterized protein from Homo sapiens (Human).